Reading from the N-terminus, the 382-residue chain is Flap endonuclease 1 (382 aa).

Residues 1 to 104 form an N-domain region; it reads MGIKGLSQVI…GELEKRSERR (104 aa). Residue aspartate 34 coordinates Mg(2+). DNA-binding residues include arginine 47 and arginine 70. Mg(2+) contacts are provided by aspartate 86, glutamate 158, glutamate 160, aspartate 179, and aspartate 181. The I-domain stretch occupies residues 122–253; the sequence is EAEKFERRLV…KKAVELIRQH (132 aa). Residue glutamate 158 participates in DNA binding. Glycine 231 and aspartate 233 together coordinate DNA. Aspartate 233 contacts Mg(2+). The tract at residues 336 to 344 is interaction with PCNA; sequence TQGRIDSFF. Positions 358 to 382 are disordered; that stretch reads KRKAEEAEKAKKGAKKGGPPKKRAK. Basic and acidic residues predominate over residues 359-368; that stretch reads RKAEEAEKAK. Basic residues predominate over residues 369–382; that stretch reads KGAKKGGPPKKRAK.

The protein belongs to the XPG/RAD2 endonuclease family. FEN1 subfamily. Interacts with PCNA. Three molecules of crn-1 bind to one PCNA trimer with each molecule binding to one PCNA monomer. PCNA stimulates the nuclease activity without altering cleavage specificity. Interacts with cps-6. Requires Mg(2+) as cofactor. Post-translationally, phosphorylated. Phosphorylation upon DNA damage induces relocalization to the nuclear plasma.

The protein resides in the nucleus. It localises to the nucleolus. It is found in the nucleoplasm. The protein localises to the mitochondrion. Functionally, structure-specific nuclease with 5'-flap endonuclease and 5'-3' exonuclease activities involved in DNA replication and repair. During DNA replication, cleaves the 5'-overhanging flap structure that is generated by displacement synthesis when DNA polymerase encounters the 5'-end of a downstream Okazaki fragment. It enters the flap from the 5'-end and then tracks to cleave the flap base, leaving a nick for ligation. Also involved in the long patch base excision repair (LP-BER) pathway, by cleaving within the apurinic/apyrimidinic (AP) site-terminated flap. Acts as a genome stabilization factor that prevents flaps from equilibrating into structures that lead to duplications and deletions. Also possesses 5'-3' exonuclease activity on nicked or gapped double-stranded DNA, and exhibits RNase H activity. Also involved in replication and repair of rDNA and in repairing mitochondrial DNA. Can associate and cooperate with cps-6 to promote stepwise DNA fragmentation, utilizing the endonuclease activity of cps-6 and both of its own 5'-3' exonuclease activity and gap-dependent endonuclease activity. May play a critical role in switching the state of cells from DNA replication/repair to DNA degradation during apoptosis. In Caenorhabditis elegans, this protein is Flap endonuclease 1.